The chain runs to 196 residues: MTDTWLIVGLGNPGAQYQGNRHNVGQMVLDELAGRVGAGFKSHKARAQVVEGRLGIGGPRVVLAKPMTYMNVSGGPVSALANFYGISPDHVVAVHDEIDIPFNTVKLKIGGGEGGHNGLRDISKALATKDYLRVRVGVGRPPGRMDTADYVLRDFGTAELKELPFLLDEAADAVELLLQEGLTAAQQKFHPAKTAG.

Tyr-17 provides a ligand contact to tRNA. His-22 serves as the catalytic Proton acceptor. Positions 69, 71, and 117 each coordinate tRNA.

Belongs to the PTH family. As to quaternary structure, monomer.

The protein resides in the cytoplasm. It carries out the reaction an N-acyl-L-alpha-aminoacyl-tRNA + H2O = an N-acyl-L-amino acid + a tRNA + H(+). Hydrolyzes ribosome-free peptidyl-tRNAs (with 1 or more amino acids incorporated), which drop off the ribosome during protein synthesis, or as a result of ribosome stalling. Functionally, catalyzes the release of premature peptidyl moieties from peptidyl-tRNA molecules trapped in stalled 50S ribosomal subunits, and thus maintains levels of free tRNAs and 50S ribosomes. The polypeptide is Peptidyl-tRNA hydrolase (Pseudarthrobacter chlorophenolicus (strain ATCC 700700 / DSM 12829 / CIP 107037 / JCM 12360 / KCTC 9906 / NCIMB 13794 / A6) (Arthrobacter chlorophenolicus)).